The chain runs to 132 residues: Protein C10 (132 aa).

A2 bears the N-acetylalanine mark.

The protein belongs to the UPF0456 family.

Its subcellular location is the cytoplasm. Its function is as follows. In brain, may be required for corpus callosum development. This is Protein C10 from Bos taurus (Bovine).